A 647-amino-acid polypeptide reads, in one-letter code: Threonine--tRNA ligase (647 aa).

Positions 1–61 (MIKITFPDGA…TEDGAIEIVT (61 aa)) constitute a TGS domain. The catalytic stretch occupies residues 242–540 (DHRKLGKELD…LIENYKGAFP (299 aa)). The Zn(2+) site is built by Cys-336, His-387, and His-517.

Belongs to the class-II aminoacyl-tRNA synthetase family. In terms of assembly, homodimer. Zn(2+) serves as cofactor.

The protein resides in the cytoplasm. The catalysed reaction is tRNA(Thr) + L-threonine + ATP = L-threonyl-tRNA(Thr) + AMP + diphosphate + H(+). In terms of biological role, catalyzes the attachment of threonine to tRNA(Thr) in a two-step reaction: L-threonine is first activated by ATP to form Thr-AMP and then transferred to the acceptor end of tRNA(Thr). Also edits incorrectly charged L-seryl-tRNA(Thr). This is Threonine--tRNA ligase from Streptococcus sanguinis (strain SK36).